The primary structure comprises 319 residues: MKNNYTSLKSPIDEGDESKTGHEIDLEKGLLPEYDSEEEGALPPYSDHARVSNSPNTHRENNPSRSTDNSSPFLIKLLISFTPIYVLNVLAICYLKYKDAFFKNYGAAEWTLFGFWCLVCTLALIFLTYFYETWTKAVKVTAVGLYNSRKKWVVIIWLLWVVICFVLFGCIKFGNLNLDKALICSTCSISAALLLFLLYVRLPFWTLKHMFSGLFQVLGVQSCVVIVTKGLMYLFDKHIDATGYEIEATSLFVIGNFFFFYEMECPGALKRMPKFIRNGIASFLEGIGNAIGRIGNAFRGANDNNNNIPLEETEAESEV.

2 disordered regions span residues 1–22 (MKNN…KTGH) and 35–68 (DSEE…RSTD). The next 6 helical transmembrane spans lie at 73–93 (FLIK…LAIC), 110–130 (WTLF…LTYF), 153–173 (VVII…CIKF), 187–207 (CSIS…FWTL), 215–235 (FQVL…MYLF), and 241–261 (ATGY…FFFY).

This sequence belongs to the WTF family. In terms of assembly, homomer. Interacts with other proteins that exhibit high sequence similarity.

The protein localises to the spore membrane. It localises to the vacuole membrane. In terms of biological role, acts as a suppressor component of the dual wtf meiotic drive system, and can suppress but not confer meiotic drive by compatible poisons. Wtf meiotic drive systems promote unequal transmission of alleles from the parental zygote to progeny spores by encoding a poison and an antidote from the same locus; the poison is trans-acting and forms toxic aggregates in all spores within an ascus, wherease the antidote is spore-specific and targets aggregates for degradation by the vacuole. Meiotic drive by wtf systems therefore lead to poisoning of all progeny that do not inherit the dual poison/antidote allele, or express a compatible antidote. This Schizosaccharomyces pombe (strain 972 / ATCC 24843) (Fission yeast) protein is Meiotic drive suppressor wtf16.